The sequence spans 457 residues: Argininosuccinate lyase (457 aa).

This sequence belongs to the lyase 1 family. Argininosuccinate lyase subfamily.

Its subcellular location is the cytoplasm. It carries out the reaction 2-(N(omega)-L-arginino)succinate = fumarate + L-arginine. The protein operates within amino-acid biosynthesis; L-arginine biosynthesis; L-arginine from L-ornithine and carbamoyl phosphate: step 3/3. The sequence is that of Argininosuccinate lyase from Pectobacterium atrosepticum (strain SCRI 1043 / ATCC BAA-672) (Erwinia carotovora subsp. atroseptica).